The primary structure comprises 322 residues: Solute carrier family 35 member B1 (322 aa).

Helical transmembrane passes span 12–32, 51–71, 85–105, 136–156, 168–188, 210–230, 243–263, and 285–305; these read LRLPLCFLGVFVCYFYYGILQ, FALTLVFIQCVINAMFAKILI, WLYAACSVSYVGAMVSSNSAL, YPLAKYLCVLLIVAGVALFMY, TVGFGELLLLLSLTLDGLTGV, LWSTVLLGAGILFTGELWEFL, ILLFGLTSALGQSFIFMTVVY, and VILFANPISSMQWVGTVLVFL. The Di-lysine motif signature appears at 318–322; that stretch reads KKTSH.

This sequence belongs to the nucleotide-sugar transporter family. SLC35B subfamily.

The protein localises to the endoplasmic reticulum membrane. The enzyme catalyses ADP(in) + ATP(out) = ADP(out) + ATP(in). The catalysed reaction is UDP(out) + ATP(in) = UDP(in) + ATP(out). It carries out the reaction UTP(out) + ATP(in) = UTP(in) + ATP(out). It catalyses the reaction dATP(out) + ATP(in) = dATP(in) + ATP(out). ATP:ADP antiporter that catalyzes the exchange of ATP and ADP across the endoplasmic reticulum (ER) membrane. Imports ATP from the cytosol to the ER lumen and exports ADP in the opposite direction. Regulates ER energy metabolism and protein biogenesis. Appears to be part of a calcium-dependent ER to cytosol low energy response axis, where calcium efflux from ER to the cytosol triggers ATP import into the ER lumen to maintain sufficient ATP supply. Provides ATP to ER chaperone HSPA5 that drives protein folding and trafficking in the ER. Can transport dATP, UTP or UDP in exchange for ATP, but the physiological relevance of this process remains to be established. This chain is Solute carrier family 35 member B1 (Slc35b1), found in Rattus norvegicus (Rat).